The following is a 260-amino-acid chain: Capsid protein (260 aa).

Positions 3-20 (KRPGDIIISTPVSKVRRR) match the Bipartite nuclear localization signal motif. The Nuclear localization signal signature appears at 41 to 55 (KRRSWTYRPMYRKPR). A zinc finger spans residues 69–86 (CEGPCKVQSYEQRDDIKH). Residues 102–123 (ITHRVGKRFCVKSIYFLGKVWM) carry the Nuclear export signal motif. A Bipartite nuclear localization signal motif is present at residues 202 to 251 (KRFFKINSHVTLFIFIQEAAKYENHTENALLLYMACTHASNPVYATMKIR).

It belongs to the geminiviridae capsid protein family. Homomultimer. Binds to single-stranded and double-stranded viral DNA. Interacts (via nuclear localization signals) with host importin alpha-1a.

The protein resides in the virion. It is found in the host nucleus. Encapsidates the viral genome into characteristic twinned ('geminate') particles. Binds the genomic viral ssDNA and shuttles it into and out of the cell nucleus. Plays a role in protection of the genome from degradation, virus acquisition and transmission by insect vectors, infectivity, and systemic movement. The CP of monopartite geminiviruses is absolutely essential for virus movement. The polypeptide is Capsid protein (Cynanchum acutum (Little mallow)).